Here is a 217-residue protein sequence, read N- to C-terminus: Pyridoxine/pyridoxamine 5'-phosphate oxidase (217 aa).

Substrate-binding positions include 13 to 16 (RREY) and Lys-71. Residues 66-71 (RTVLLK), 81-82 (YT), Arg-87, Lys-88, and Gln-110 each bind FMN. Tyr-128, Arg-132, and Ser-136 together coordinate substrate. Residues 145–146 (QS) and Trp-190 contribute to the FMN site. 196–198 (RLH) contributes to the substrate binding site. Arg-200 contacts FMN.

Belongs to the pyridoxamine 5'-phosphate oxidase family. Homodimer. FMN is required as a cofactor.

The enzyme catalyses pyridoxamine 5'-phosphate + O2 + H2O = pyridoxal 5'-phosphate + H2O2 + NH4(+). It carries out the reaction pyridoxine 5'-phosphate + O2 = pyridoxal 5'-phosphate + H2O2. The protein operates within cofactor metabolism; pyridoxal 5'-phosphate salvage; pyridoxal 5'-phosphate from pyridoxamine 5'-phosphate: step 1/1. It participates in cofactor metabolism; pyridoxal 5'-phosphate salvage; pyridoxal 5'-phosphate from pyridoxine 5'-phosphate: step 1/1. In terms of biological role, catalyzes the oxidation of either pyridoxine 5'-phosphate (PNP) or pyridoxamine 5'-phosphate (PMP) into pyridoxal 5'-phosphate (PLP). The sequence is that of Pyridoxine/pyridoxamine 5'-phosphate oxidase from Rubrobacter xylanophilus (strain DSM 9941 / JCM 11954 / NBRC 16129 / PRD-1).